Consider the following 278-residue polypeptide: 4-deoxy-L-threo-5-hexosulose-uronate ketol-isomerase (278 aa).

Residues His196, His198, Glu203, and His245 each contribute to the Zn(2+) site.

It belongs to the KduI family. Homohexamer. Zn(2+) serves as cofactor.

The catalysed reaction is 5-dehydro-4-deoxy-D-glucuronate = 3-deoxy-D-glycero-2,5-hexodiulosonate. The protein operates within glycan metabolism; pectin degradation; 2-dehydro-3-deoxy-D-gluconate from pectin: step 4/5. Its function is as follows. Catalyzes the isomerization of 5-dehydro-4-deoxy-D-glucuronate to 3-deoxy-D-glycero-2,5-hexodiulosonate. The chain is 4-deoxy-L-threo-5-hexosulose-uronate ketol-isomerase from Escherichia coli (strain UTI89 / UPEC).